Reading from the N-terminus, the 58-residue chain is Potassium channel toxin alpha-KTx BmKcug1a (58 aa).

The signal sequence occupies residues 1 to 21 (MKISFLLLLAIVICSIGWTEA). Q22 bears the Pyrrolidone carboxylic acid mark. Cystine bridges form between C28–C49, C34–C54, and C38–C56.

This sequence belongs to the short scorpion toxin superfamily. Potassium channel inhibitor family. Alpha-KTx 01 subfamily. Expressed by the venom gland.

It localises to the secreted. In terms of biological role, potent blocker of both large-conductance calcium-activated potassium channels (KCa1.1/KCNMA1) and voltage-gated potassium channels (Kv1.3/KCNA3 and ERG1/Kv11.1/KCNH2). The sequence is that of Potassium channel toxin alpha-KTx BmKcug1a from Olivierus martensii (Manchurian scorpion).